Here is a 131-residue protein sequence, read N- to C-terminus: Holo-[acyl-carrier-protein] synthase (131 aa).

Mg(2+)-binding residues include Asp-8 and Glu-59.

It belongs to the P-Pant transferase superfamily. AcpS family. Requires Mg(2+) as cofactor.

The protein resides in the cytoplasm. It carries out the reaction apo-[ACP] + CoA = holo-[ACP] + adenosine 3',5'-bisphosphate + H(+). In terms of biological role, transfers the 4'-phosphopantetheine moiety from coenzyme A to a Ser of acyl-carrier-protein. This Rickettsia africae (strain ESF-5) protein is Holo-[acyl-carrier-protein] synthase.